A 383-amino-acid chain; its full sequence is MNTNKNILILTANYGNGHVQVAKTLYQECERLGFKNVTVSNLYQESNPIVSEITQYLYLKSFSIGKQFYRLFYYGVDKIYNKRKFNIYFKMGNKRLDQLVKKHQPDIIINTFPMIVVPEYRRRMGKVIPTFNVMTDFCLHKIWVHEHIDKYYVATDYVKEKLLEIGTHPSNVKITGIPIRRQFEEEMDKDKIYEKYQLSPDKKILLIMAGAHGVLKNVKELCESLVTKEDVQVVVVCGKNTMLKSSLEDIEALYPNKLRTLGYIERIDELFRVADCMITKPGGITLTEATAIGVPVILYKPVPGQEKENALFFEDRGAAIVVNRHEEILESVSSLLADEKKLNEMKKNIKSLHLSNSSEVILTDIIEQSEIIMNKKQTVRALS.

The protein belongs to the glycosyltransferase 28 family. UgtP subfamily.

The protein resides in the cell membrane. The catalysed reaction is a 1,2-diacyl-3-O-(beta-D-glucopyranosyl)-sn-glycerol + UDP-alpha-D-glucose = a 1,2-diacyl-3-O-(beta-D-Glc-(1-&gt;6)-beta-D-Glc)-sn-glycerol + UDP + H(+). It carries out the reaction a 1,2-diacyl-3-O-(beta-D-Glc-(1-&gt;6)-beta-D-Glc)-sn-glycerol + UDP-alpha-D-glucose = a 1,2-diacyl-3-O-(beta-D-Glc-(1-&gt;6)-beta-D-Glc-(1-&gt;6)-beta-D-Glc)-sn-glycerol + UDP + H(+). It catalyses the reaction a 1,2-diacyl-sn-glycerol + UDP-alpha-D-glucose = a 1,2-diacyl-3-O-(beta-D-glucopyranosyl)-sn-glycerol + UDP + H(+). It participates in glycolipid metabolism; diglucosyl-diacylglycerol biosynthesis. Functionally, processive glucosyltransferase involved in the biosynthesis of both the bilayer- and non-bilayer-forming membrane glucolipids. Is able to successively transfer up to three glucosyl residues to diacylglycerol (DAG), thereby catalyzing the formation of beta-monoglucosyl-DAG (3-O-(beta-D-glucopyranosyl)-1,2-diacyl-sn-glycerol), beta-diglucosyl-DAG (3-O-(beta-D-glucopyranosyl-beta-(1-&gt;6)-D-glucopyranosyl)-1,2-diacyl-sn-glycerol) and beta-triglucosyl-DAG (3-O-(beta-D-glucopyranosyl-beta-(1-&gt;6)-D-glucopyranosyl-beta-(1-&gt;6)-D-glucopyranosyl)-1,2-diacyl-sn-glycerol). Beta-diglucosyl-DAG is the predominant glycolipid found in Bacillales and is also used as a membrane anchor for lipoteichoic acid (LTA). This is Processive diacylglycerol beta-glucosyltransferase from Bacillus licheniformis (strain ATCC 14580 / DSM 13 / JCM 2505 / CCUG 7422 / NBRC 12200 / NCIMB 9375 / NCTC 10341 / NRRL NRS-1264 / Gibson 46).